Reading from the N-terminus, the 176-residue chain is Shikimate kinase (176 aa).

14–19 contributes to the ATP binding site; the sequence is GAGKSS. Serine 18 provides a ligand contact to Mg(2+). 3 residues coordinate substrate: aspartate 36, arginine 60, and glycine 82. Residue arginine 120 participates in ATP binding. Arginine 138 lines the substrate pocket.

It belongs to the shikimate kinase family. As to quaternary structure, monomer. The cofactor is Mg(2+).

The protein localises to the cytoplasm. It catalyses the reaction shikimate + ATP = 3-phosphoshikimate + ADP + H(+). Its pathway is metabolic intermediate biosynthesis; chorismate biosynthesis; chorismate from D-erythrose 4-phosphate and phosphoenolpyruvate: step 5/7. Functionally, catalyzes the specific phosphorylation of the 3-hydroxyl group of shikimic acid using ATP as a cosubstrate. In Dehalococcoides mccartyi (strain ATCC BAA-2100 / JCM 16839 / KCTC 5957 / BAV1), this protein is Shikimate kinase.